The primary structure comprises 491 residues: Protein nucleotidyltransferase YdiU (491 aa).

ATP-binding residues include glycine 92, glycine 94, arginine 95, lysine 115, aspartate 127, glycine 128, arginine 178, and arginine 185. The Proton acceptor role is filled by aspartate 254. Mg(2+) is bound by residues asparagine 255 and aspartate 264. Position 264 (aspartate 264) interacts with ATP.

This sequence belongs to the SELO family. Mg(2+) serves as cofactor. The cofactor is Mn(2+).

It catalyses the reaction L-seryl-[protein] + ATP = 3-O-(5'-adenylyl)-L-seryl-[protein] + diphosphate. The enzyme catalyses L-threonyl-[protein] + ATP = 3-O-(5'-adenylyl)-L-threonyl-[protein] + diphosphate. The catalysed reaction is L-tyrosyl-[protein] + ATP = O-(5'-adenylyl)-L-tyrosyl-[protein] + diphosphate. It carries out the reaction L-histidyl-[protein] + UTP = N(tele)-(5'-uridylyl)-L-histidyl-[protein] + diphosphate. It catalyses the reaction L-seryl-[protein] + UTP = O-(5'-uridylyl)-L-seryl-[protein] + diphosphate. The enzyme catalyses L-tyrosyl-[protein] + UTP = O-(5'-uridylyl)-L-tyrosyl-[protein] + diphosphate. In terms of biological role, nucleotidyltransferase involved in the post-translational modification of proteins. It can catalyze the addition of adenosine monophosphate (AMP) or uridine monophosphate (UMP) to a protein, resulting in modifications known as AMPylation and UMPylation. This Pseudarthrobacter chlorophenolicus (strain ATCC 700700 / DSM 12829 / CIP 107037 / JCM 12360 / KCTC 9906 / NCIMB 13794 / A6) (Arthrobacter chlorophenolicus) protein is Protein nucleotidyltransferase YdiU.